The sequence spans 68 residues: Translational regulator CsrA 1 (68 aa).

The protein belongs to the CsrA/RsmA family. As to quaternary structure, homodimer; the beta-strands of each monomer intercalate to form a hydrophobic core, while the alpha-helices form wings that extend away from the core.

The protein localises to the cytoplasm. Its function is as follows. A key translational regulator that binds mRNA to regulate translation initiation and/or mRNA stability. Mediates global changes in gene expression, shifting from rapid growth to stress survival by linking envelope stress, the stringent response and the catabolite repression systems. Usually binds in the 5'-UTR; binding at or near the Shine-Dalgarno sequence prevents ribosome-binding, repressing translation, binding elsewhere in the 5'-UTR can activate translation and/or stabilize the mRNA. Its function is antagonized by small RNA(s). The protein is Translational regulator CsrA 1 of Coxiella burnetii (strain RSA 493 / Nine Mile phase I).